Consider the following 457-residue polypeptide: NADP-specific glutamate dehydrogenase (457 aa).

The active site involves Lys113.

This sequence belongs to the Glu/Leu/Phe/Val dehydrogenases family. Homohexamer.

The catalysed reaction is L-glutamate + NADP(+) + H2O = 2-oxoglutarate + NH4(+) + NADPH + H(+). This is NADP-specific glutamate dehydrogenase (GDH) from Tuber borchii (White truffle).